The chain runs to 1198 residues: Spindle-defective protein 5 (1198 aa).

Residues 1-10 (MEDNSVLNED) show a composition bias toward polar residues. The disordered stretch occupies residues 1–45 (MEDNSVLNEDSNLEHVEGQPRRSMSQPVLNVEGDKRTSSTSATQQ). Coiled-coil stretches lie at residues 67-381 (EENK…QLTG), 566-603 (HDVAVNVEQMQEKMSQIREALARLFERLKSSAALFEEI), 694-916 (KFTS…LSTS), 983-1035 (DELC…ENVP), and 1127-1175 (KNET…EFQD).

It is found in the cytoplasm. The protein resides in the cytoskeleton. The protein localises to the microtubule organizing center. Its subcellular location is the centrosome. In terms of biological role, plays a central role in centrosome maturation and mitotic spindle assembly during the first division of the zygote. Required for the centrosomal localization of air-1 and zyg-9. Probably not required in late embryogenesis and during larval development. This Caenorhabditis elegans protein is Spindle-defective protein 5 (spd-5).